The chain runs to 327 residues: MSETNGGNAARENSEVKQTAVENPIDKLDGTPKRPREKDQDEQAEETSDKSEAPNKNDEEKKEEGKKDQEPSHKKIKVDDGKTVESGIVEDDKKEDKFVFGAASKFGTGFGVAKKDTKDGDATTSTESLPASDSKTKKPFAFGSGLSFGSGFNILKNKTENNSESEKKATDVDKDKVHSGSEQLANASEDTKDKPKPLKLQKQEVKSGEESEECIYQVNAKLYQLSNIKEGWKERGVGIIKINKSKDDVEKTRIVMRSRGILKVILNIQLVKGFTVQKGFTGSLQSEKFIRLLAVDDNGDPAQYAIKTGKKETTDELYNIIVKSVPK.

Disordered regions lie at residues methionine 1 to aspartate 96 and glycine 109 to valine 205. Residues proline 24 to threonine 83 are compositionally biased toward basic and acidic residues. At threonine 31 the chain carries Phosphothreonine. Positions alanine 122–aspartate 133 are enriched in polar residues. Positions phenylalanine 140 to phenylalanine 152 are enriched in low complexity. Composition is skewed to basic and acidic residues over residues asparagine 157 to serine 179 and glutamate 189 to valine 205. Phosphoserine is present on serine 179. The 137-residue stretch at threonine 191 to lysine 327 folds into the RanBD1 domain.

In terms of assembly, interacts with GSP1, XPO1 and SRM1.

The protein resides in the nucleus. In terms of biological role, important for the export of protein containing nuclear export signal (NES) out of the nucleus. Stimulates the GTPase activity of GSP1. The sequence is that of Ran-specific GTPase-activating protein 2 (YRB2) from Saccharomyces cerevisiae (strain ATCC 204508 / S288c) (Baker's yeast).